The sequence spans 145 residues: Large ribosomal subunit protein uL11 (145 aa).

The protein belongs to the universal ribosomal protein uL11 family. As to quaternary structure, part of the ribosomal stalk of the 50S ribosomal subunit. Interacts with L10 and the large rRNA to form the base of the stalk. L10 forms an elongated spine to which L12 dimers bind in a sequential fashion forming a multimeric L10(L12)X complex. In terms of processing, one or more lysine residues are methylated.

Forms part of the ribosomal stalk which helps the ribosome interact with GTP-bound translation factors. This is Large ribosomal subunit protein uL11 from Rickettsia massiliae (strain Mtu5).